Reading from the N-terminus, the 517-residue chain is Crotonobetaine/carnitine--CoA ligase (517 aa).

This sequence belongs to the ATP-dependent AMP-binding enzyme family.

It carries out the reaction 4-(trimethylamino)butanoate + ATP + CoA = 4-(trimethylamino)butanoyl-CoA + AMP + diphosphate. It catalyses the reaction crotonobetaine + ATP + CoA = crotonobetainyl-CoA + AMP + diphosphate. The enzyme catalyses (R)-carnitine + ATP + CoA = (R)-carnitinyl-CoA + AMP + diphosphate. The protein operates within amine and polyamine metabolism; carnitine metabolism. Functionally, catalyzes the transfer of CoA to carnitine, generating the initial carnitinyl-CoA needed for the CaiB reaction cycle. Also has activity toward crotonobetaine and gamma-butyrobetaine. This is Crotonobetaine/carnitine--CoA ligase from Shigella flexneri.